Here is a 262-residue protein sequence, read N- to C-terminus: NAD-dependent glucose-6-phosphate dehydrogenase (262 aa).

NAD(+) is bound by residues Asn90, Ser115, Tyr152, and Lys156. The Proton acceptor role is filled by Tyr152.

This sequence belongs to the NAD(P)-dependent epimerase/dehydratase family. Homodimer.

It carries out the reaction D-glucose 6-phosphate + NAD(+) = 6-phospho-D-glucono-1,5-lactone + NADH + H(+). It functions in the pathway carbohydrate degradation; pentose phosphate pathway. Its function is as follows. Catalyzes the NAD-dependent oxidation of glucose 6-phosphate to 6-phosphogluconolactone. The protein is NAD-dependent glucose-6-phosphate dehydrogenase of Haloferax volcanii (strain ATCC 29605 / DSM 3757 / JCM 8879 / NBRC 14742 / NCIMB 2012 / VKM B-1768 / DS2) (Halobacterium volcanii).